The following is a 49-amino-acid chain: Large ribosomal subunit protein bL33 (49 aa).

It belongs to the bacterial ribosomal protein bL33 family.

This is Large ribosomal subunit protein bL33 from Syntrophomonas wolfei subsp. wolfei (strain DSM 2245B / Goettingen).